Consider the following 365-residue polypeptide: Peptide chain release factor 2 (365 aa).

Gln252 is subject to N5-methylglutamine.

Belongs to the prokaryotic/mitochondrial release factor family. In terms of processing, methylated by PrmC. Methylation increases the termination efficiency of RF2.

Its subcellular location is the cytoplasm. Functionally, peptide chain release factor 2 directs the termination of translation in response to the peptide chain termination codons UGA and UAA. The polypeptide is Peptide chain release factor 2 (prfB) (Salmonella typhimurium (strain LT2 / SGSC1412 / ATCC 700720)).